The following is a 150-amino-acid chain: MIVEEIQGNIANLSNSEKQKHVEKVYLENSDLVKRIQRVVTDHGTEIGIRLKQPIDLQYGDILYADDHNMIVVDVNSEDLLVIQPRTLQEMGDIAHQLGNRHLPAQFTETEMLVQYDYLVEDLLKSLGIPYVREDRKVNKAFRHIGHSHD.

It belongs to the UreE family.

Its subcellular location is the cytoplasm. Involved in urease metallocenter assembly. Binds nickel. Probably functions as a nickel donor during metallocenter assembly. The protein is Urease accessory protein UreE of Staphylococcus aureus (strain MRSA252).